The primary structure comprises 374 residues: Coiled-coil domain-containing protein 89 (374 aa).

The segment at 1-40 (MRAPMLQKQQAPRMDTPPPEERLEKQNEKLNNQEEETEFK) is disordered. At threonine 16 the chain carries Phosphothreonine. Positions 19-32 (PEERLEKQNEKLNN) are enriched in basic and acidic residues. A coiled-coil region spans residues 20-351 (EERLEKQNEK…DELRLQSEAF (332 aa)).

It belongs to the CCDC89 family. In terms of assembly, interacts with HEY1.

It is found in the cytoplasm. Its subcellular location is the nucleus. The polypeptide is Coiled-coil domain-containing protein 89 (CCDC89) (Homo sapiens (Human)).